Consider the following 424-residue polypeptide: Inhibin beta A chain (424 aa).

Positions 1–20 (MPLLWKRGFLLVICWIIVRS) are cleaved as a signal peptide. The propeptide occupies 21–308 (SPTPGSEGHS…EDRQHRRRER (288 aa)). An N-linked (GlcNAc...) asparagine glycan is attached at Asn-165. Disordered regions lie at residues 178–200 (QQRQ…LKGE) and 260–288 (KKKK…QSHR). Over residues 263 to 275 (KEDDGEGKEKDGG) the composition is skewed to basic and acidic residues. 4 disulfides stabilise this stretch: Cys-312-Cys-320, Cys-319-Cys-389, Cys-348-Cys-421, and Cys-352-Cys-423.

It belongs to the TGF-beta family. Dimeric, linked by one or more disulfide bonds. Inhibin A is a dimer of alpha and beta-A. Inhibin B is a dimer of alpha and beta-B. Activin A is a homodimer of beta-A. Activin B is a homodimer of beta-B. Activin AB is a dimer of beta-A and beta-B. In terms of tissue distribution, ciliary ganglion neurons. Levels are higher in the choroid than the iris.

The protein localises to the secreted. Its function is as follows. Inhibins and activins inhibit and activate, respectively, the secretion of follitropin by the pituitary gland. Inhibins/activins are involved in regulating a number of diverse functions such as hypothalamic and pituitary hormone secretion, gonadal hormone secretion, germ cell development and maturation, erythroid differentiation, insulin secretion, nerve cell survival, embryonic axial development or bone growth, depending on their subunit composition. Inhibins appear to oppose the functions of activins. Induces somatostatin in the ciliary ganglion neurons and may play a role in regulating neurotransmitter phenotype. The sequence is that of Inhibin beta A chain (INHBA) from Gallus gallus (Chicken).